Here is a 321-residue protein sequence, read N- to C-terminus: Lipoyl synthase (321 aa).

Positions 68, 73, 79, 94, 98, 101, and 308 each coordinate [4Fe-4S] cluster. The 218-residue stretch at 80-297 folds into the Radical SAM core domain; sequence FNHGTATFMI…KEIALELGFT (218 aa).

It belongs to the radical SAM superfamily. Lipoyl synthase family. [4Fe-4S] cluster serves as cofactor.

It localises to the cytoplasm. It catalyses the reaction [[Fe-S] cluster scaffold protein carrying a second [4Fe-4S](2+) cluster] + N(6)-octanoyl-L-lysyl-[protein] + 2 oxidized [2Fe-2S]-[ferredoxin] + 2 S-adenosyl-L-methionine + 4 H(+) = [[Fe-S] cluster scaffold protein] + N(6)-[(R)-dihydrolipoyl]-L-lysyl-[protein] + 4 Fe(3+) + 2 hydrogen sulfide + 2 5'-deoxyadenosine + 2 L-methionine + 2 reduced [2Fe-2S]-[ferredoxin]. It participates in protein modification; protein lipoylation via endogenous pathway; protein N(6)-(lipoyl)lysine from octanoyl-[acyl-carrier-protein]: step 2/2. Catalyzes the radical-mediated insertion of two sulfur atoms into the C-6 and C-8 positions of the octanoyl moiety bound to the lipoyl domains of lipoate-dependent enzymes, thereby converting the octanoylated domains into lipoylated derivatives. The sequence is that of Lipoyl synthase from Vibrio campbellii (strain ATCC BAA-1116).